A 303-amino-acid chain; its full sequence is Acetaldehyde dehydrogenase 1 (303 aa).

Catalysis depends on C130, which acts as the Acyl-thioester intermediate. NAD(+)-binding positions include 161–169 (SVGPGTRKN) and N272.

The protein belongs to the acetaldehyde dehydrogenase family.

It carries out the reaction acetaldehyde + NAD(+) + CoA = acetyl-CoA + NADH + H(+). In Methylibium petroleiphilum (strain ATCC BAA-1232 / LMG 22953 / PM1), this protein is Acetaldehyde dehydrogenase 1.